The chain runs to 705 residues: Dolichyl-diphosphooligosaccharide--protein glycosyltransferase subunit STT3A (705 aa).

Residues 1 to 17 (MTKLGFLRLSYEKQDTL) are Cytoplasmic-facing. Residues 18 to 38 (LKLLILSMAAVLSFSTRLFAV) traverse the membrane as a helical segment. The Lumenal portion of the chain corresponds to 39 to 119 (LRFESVIHEF…IDIRNVCVFL (81 aa)). Residues 47 to 49 (EFD) carry the DXD motif 1 motif. Residue Asp-49 coordinates Mn(2+). A helical transmembrane segment spans residues 120-138 (APLFSSFTTIVTYHLTKEL). The Cytoplasmic portion of the chain corresponds to 139–140 (KD). The helical transmembrane segment at 141 to 158 (AGAGLLAAAMIAVVPGYI) threads the bilayer. Topologically, residues 159 to 169 (SRSVAGSYDNE) are lumenal. The Mn(2+) site is built by Asp-167 and Glu-169. A DXD motif 2 motif is present at residues 167–169 (DNE). The chain crosses the membrane as a helical span at residues 170–189 (GIAIFCMLLTYYMWIKAVKT). The Cytoplasmic portion of the chain corresponds to 190–191 (GS). The helical transmembrane segment at 192–206 (IYWAAKCALAYFYMV) threads the bilayer. Residues 207–211 (SSWGG) are Lumenal-facing. Residues 212 to 228 (YVFLINLIPLHVLVLML) form a helical membrane-spanning segment. The Cytoplasmic segment spans residues 229 to 233 (TGRFS). Residues 234–259 (HRIYVAYCTVYCLGTILSMQISFVGF) traverse the membrane as a helical segment. Residues 260 to 267 (QPVLSSEH) are Lumenal-facing. The helical transmembrane segment at 268–287 (MAAFGVFGLCQIHAFVDYLR) threads the bilayer. Over 288–300 (SKLNPQQFEVLFR) the chain is Cytoplasmic. A helical membrane pass occupies residues 301-321 (SVISLVGFVLLTIGALLMLTG). Residues 322–356 (KISPWTGRFYSLLDPSYAKNNIPIIASVSEHQPTT) lie on the Lumenal side of the membrane. An SVSE motif motif is present at residues 348-351 (SVSE). The chain crosses the membrane as a helical span at residues 357 to 379 (WSSYYFDLQLLVFMFPVGLYYCF). Over 380 to 385 (SNLSDA) the chain is Cytoplasmic. Residues 386–402 (RIFIIMYGVTSMYFSAV) form a helical membrane-spanning segment. Residues 403 to 406 (MVRL) are Lumenal-facing. Arg-405 serves as a coordination point for dolichyl diphosphooligosaccharide. A helical transmembrane segment spans residues 407 to 428 (MLVLAPVMCILSGIGVSQVLST). Residues 429–453 (YMKNLDISRQDKKSKKQQDSTYPIK) are Cytoplasmic-facing. Residues 454-473 (NEVASGMILVMAFFLITYTF) form a helical membrane-spanning segment. Topologically, residues 474 to 705 (HSTWVTSEAY…DLDNRGLSRT (232 aa)) are lumenal. The segment at 525-527 (WWD) is interacts with target acceptor peptide in protein substrate. A WWDYG motif motif is present at residues 525–529 (WWDYG). A dolichyl diphosphooligosaccharide-binding site is contributed by Tyr-530. Residues Asn-537 and Asn-544 are each glycosylated (N-linked (GlcNAc...) asparagine). Asn-548 carries N-linked (GlcNAc...) (high mannose) asparagine glycosylation. A DK motif motif is present at residues 592–599 (DINKFLWM).

The protein belongs to the STT3 family. Component of the oligosaccharyltransferase (OST) complex. There are 2 OST complexes, OST-A and OST-B, which contain STT3A or STT3B as catalytic subunit, respectively. OST-A and OST-B contain common core subunits RPN1, RPN2, OST48, OST4, DAD1 and TMEM258, and OST-A contains DC2/OSTC and KRTCAP2/KCP2 specific accessory subunits. OST-A complex assembly occurs through the formation of 3 subcomplexes. Subcomplex 1 contains RPN1 and TMEM258, subcomplex 2 contains the OST-A-specific subunits STT3A, DC2/OSTC, and KCP2 as well as the core subunit OST4, and subcomplex 3 contains RPN2, DAD1, and OST48. The OST-A complex can form stable complexes with the Sec61 complex or with both the Sec61 and TRAP complexes. Mg(2+) is required as a cofactor. The cofactor is Mn(2+).

The protein localises to the endoplasmic reticulum membrane. The enzyme catalyses a di-trans,poly-cis-dolichyl diphosphooligosaccharide + L-asparaginyl-[protein] = N(4)-(oligosaccharide-(1-&gt;4)-N-acetyl-beta-D-glucosaminyl-(1-&gt;4)-N-acetyl-beta-D-glucosaminyl)-L-asparaginyl-[protein] + a di-trans,poly-cis-dolichyl diphosphate + H(+). Its pathway is protein modification; protein glycosylation. In terms of biological role, catalytic subunit of the oligosaccharyl transferase (OST) complex that catalyzes the initial transfer of a defined glycan (Glc(3)Man(9)GlcNAc(2) in eukaryotes) from the lipid carrier dolichol-pyrophosphate to an asparagine residue within an Asn-X-Ser/Thr consensus motif in nascent polypeptide chains, the first step in protein N-glycosylation. N-glycosylation occurs cotranslationally and the complex associates with the Sec61 complex at the channel-forming translocon complex that mediates protein translocation across the endoplasmic reticulum (ER). All subunits are required for a maximal enzyme activity. This subunit contains the active site and the acceptor peptide and donor lipid-linked oligosaccharide (LLO) binding pockets. STT3A is present in the majority of OST complexes and mediates cotranslational N-glycosylation of most sites on target proteins, while STT3B-containing complexes are required for efficient post-translational glycosylation and mediate glycosylation of sites that have been skipped by STT3A. STT3A-containing OST-A complex is also required to prevent hyperglycosylation of some target proteins by preventing glycosylation of facultative sites before folding of target proteins is completed. This is Dolichyl-diphosphooligosaccharide--protein glycosyltransferase subunit STT3A from Bos taurus (Bovine).